Reading from the N-terminus, the 317-residue chain is Ribonuclease Z (317 aa).

7 residues coordinate Zn(2+): histidine 63, histidine 65, aspartate 67, histidine 68, histidine 143, aspartate 214, and histidine 272. Residue aspartate 67 is the Proton acceptor of the active site.

The protein belongs to the RNase Z family. Homodimer. The cofactor is Zn(2+).

It catalyses the reaction Endonucleolytic cleavage of RNA, removing extra 3' nucleotides from tRNA precursor, generating 3' termini of tRNAs. A 3'-hydroxy group is left at the tRNA terminus and a 5'-phosphoryl group is left at the trailer molecule.. Zinc phosphodiesterase, which displays some tRNA 3'-processing endonuclease activity. Probably involved in tRNA maturation, by removing a 3'-trailer from precursor tRNA. The protein is Ribonuclease Z of Ligilactobacillus salivarius (strain UCC118) (Lactobacillus salivarius).